The chain runs to 397 residues: Mycinamicin IV hydroxylase/epoxidase (397 aa).

The tract at residues 63–86 (RGPSMTRDEPRTRPEMVKGGLLSM) is disordered. Residues 68–78 (TRDEPRTRPEM) show a composition bias toward basic and acidic residues. Position 81 (G81) interacts with substrate. The heme site is built by H91, R95, R288, H344, and C346.

This sequence belongs to the cytochrome P450 family. The cofactor is heme.

Its pathway is antibiotic biosynthesis; mycinamicin biosynthesis. In terms of biological role, involved in the biosynthesis of mycinamicin, a 16-membered macrolide antibiotic. Catalyzes consecutive hydroxylation (at C14) and epoxidation (at C12-C13) reactions with mycinamicin IV as initial substrate, leading to mycinamicin II. These reactions require prior dimethylation of 6-deoxyallose to mycinose for effective conversion by the dual function MycG enzyme. This is Mycinamicin IV hydroxylase/epoxidase from Micromonospora griseorubida.